Consider the following 312-residue polypeptide: tRNA pseudouridine synthase B (312 aa).

The active-site Nucleophile is Asp-38.

Belongs to the pseudouridine synthase TruB family. Type 1 subfamily.

The catalysed reaction is uridine(55) in tRNA = pseudouridine(55) in tRNA. Functionally, responsible for synthesis of pseudouridine from uracil-55 in the psi GC loop of transfer RNAs. This is tRNA pseudouridine synthase B from Syntrophus aciditrophicus (strain SB).